The chain runs to 285 residues: Shikimate dehydrogenase (NADP(+)) (285 aa).

Shikimate-binding positions include 20–22 and Ser-67; that span reads SIS. Lys-71 acts as the Proton acceptor in catalysis. Shikimate is bound by residues Asn-92 and Asp-107. NADP(+) contacts are provided by residues 129–133 and Ile-227; that span reads GAGGA. Tyr-229 is a shikimate binding site. Gly-250 contacts NADP(+).

Belongs to the shikimate dehydrogenase family. In terms of assembly, homodimer.

It catalyses the reaction shikimate + NADP(+) = 3-dehydroshikimate + NADPH + H(+). It participates in metabolic intermediate biosynthesis; chorismate biosynthesis; chorismate from D-erythrose 4-phosphate and phosphoenolpyruvate: step 4/7. In terms of biological role, involved in the biosynthesis of the chorismate, which leads to the biosynthesis of aromatic amino acids. Catalyzes the reversible NADPH linked reduction of 3-dehydroshikimate (DHSA) to yield shikimate (SA). The protein is Shikimate dehydrogenase (NADP(+)) of Streptococcus thermophilus (strain ATCC BAA-491 / LMD-9).